Consider the following 249-residue polypeptide: Small ribosomal subunit protein eS6 (249 aa).

Residue K14 forms a Glycyl lysine isopeptide (Lys-Gly) (interchain with G-Cter in SUMO2) linkage. E35 is subject to ADP-ribosyl glutamic acid. At R137 the chain carries (3R)-3-hydroxyarginine. S148 carries the phosphoserine modification. N6-acetyllysine is present on K211. The segment covering 217-229 has biased composition (basic and acidic residues); it reads MKEAKEKRQEQIA. The segment at 217–249 is disordered; that stretch reads MKEAKEKRQEQIAKRRRLSSLRASTSKSESSQK. Phosphoserine; by RPS6KA1, RPS6KA3, DAPK1 and PASK is present on residues S235 and S236. Residues 236–249 are compositionally biased toward low complexity; that stretch reads SLRASTSKSESSQK. S240, S242, S244, and S247 each carry phosphoserine.

It belongs to the eukaryotic ribosomal protein eS6 family. As to quaternary structure, component of the small ribosomal subunit. Part of the small subunit (SSU) processome, composed of more than 70 proteins and the RNA chaperone small nucleolar RNA (snoRNA) U3. Ribosomal protein S6 is the major substrate of protein kinases in eukaryote ribosomes. The phosphorylation is stimulated by growth factors, tumor promoting agents, and mitogens. It is dephosphorylated at growth arrest. Phosphorylated at Ser-235 and Ser-236 by RPS6KA1 and RPS6KA3; phosphorylation at these sites facilitates the assembly of the pre-initiation complex. Post-translationally, specifically hydroxylated (with R stereochemistry) at C-3 of Arg-137 by KDM8. In terms of processing, mono-ADP-ribosylation at Glu-35 by PARP16 inhibits polysome assembly and mRNA loading, thereby inhibiting protein translation.

It localises to the cytoplasm. Its subcellular location is the nucleus. It is found in the nucleolus. In terms of biological role, component of the 40S small ribosomal subunit. Plays an important role in controlling cell growth and proliferation through the selective translation of particular classes of mRNA. Part of the small subunit (SSU) processome, first precursor of the small eukaryotic ribosomal subunit. During the assembly of the SSU processome in the nucleolus, many ribosome biogenesis factors, an RNA chaperone and ribosomal proteins associate with the nascent pre-rRNA and work in concert to generate RNA folding, modifications, rearrangements and cleavage as well as targeted degradation of pre-ribosomal RNA by the RNA exosome. The polypeptide is Small ribosomal subunit protein eS6 (RPS6) (Bos taurus (Bovine)).